A 168-amino-acid chain; its full sequence is Protein GrpE (168 aa).

Belongs to the GrpE family. As to quaternary structure, homodimer.

It localises to the cytoplasm. In terms of biological role, participates actively in the response to hyperosmotic and heat shock by preventing the aggregation of stress-denatured proteins, in association with DnaK and GrpE. It is the nucleotide exchange factor for DnaK and may function as a thermosensor. Unfolded proteins bind initially to DnaJ; upon interaction with the DnaJ-bound protein, DnaK hydrolyzes its bound ATP, resulting in the formation of a stable complex. GrpE releases ADP from DnaK; ATP binding to DnaK triggers the release of the substrate protein, thus completing the reaction cycle. Several rounds of ATP-dependent interactions between DnaJ, DnaK and GrpE are required for fully efficient folding. This chain is Protein GrpE, found in Thermotoga neapolitana (strain ATCC 49049 / DSM 4359 / NBRC 107923 / NS-E).